The sequence spans 350 residues: Erythronate-4-phosphate dehydrogenase (350 aa).

Residues Ser45 and Thr66 each contribute to the substrate site. NAD(+) is bound by residues 124–125 (QV), Asp144, 203–205 (ASR), and Asp226. Arg205 is a catalytic residue. Glu231 is an active-site residue. The Proton donor role is filled by His248. Gly251 lines the NAD(+) pocket.

Belongs to the D-isomer specific 2-hydroxyacid dehydrogenase family. PdxB subfamily. In terms of assembly, homodimer.

Its subcellular location is the cytoplasm. The enzyme catalyses 4-phospho-D-erythronate + NAD(+) = (R)-3-hydroxy-2-oxo-4-phosphooxybutanoate + NADH + H(+). It functions in the pathway cofactor biosynthesis; pyridoxine 5'-phosphate biosynthesis; pyridoxine 5'-phosphate from D-erythrose 4-phosphate: step 2/5. Functionally, catalyzes the oxidation of erythronate-4-phosphate to 3-hydroxy-2-oxo-4-phosphonooxybutanoate. The chain is Erythronate-4-phosphate dehydrogenase from Legionella pneumophila subsp. pneumophila (strain Philadelphia 1 / ATCC 33152 / DSM 7513).